The sequence spans 549 residues: FERM domain-containing protein 1 (549 aa).

The segment at M1 to Q40 is disordered. Residues R54 to R369 enclose the FERM domain. Disordered stretches follow at residues S377 to G400 and H422 to A464. Residues S430 to R443 show a composition bias toward low complexity. The span at G444–Q462 shows a compositional bias: polar residues.

The protein is FERM domain-containing protein 1 (FRMD1) of Homo sapiens (Human).